The sequence spans 98 residues: Signal peptidase complex subunit 1 (98 aa).

At 1–18 (MLDIQTHMDFAGQGKAER) the chain is on the cytoplasmic side. A helical membrane pass occupies residues 19–38 (WSRFIITFFGIVGLVYGAFV). Residues 39-42 (QQFS) are Lumenal-facing. The chain crosses the membrane as a helical span at residues 43–65 (QTVYILGAGFVLSSLITIPPWPL). Over 66-98 (YRRNALKWQKPIDTDAKSSSSESGDEGKKKKKQ) the chain is Cytoplasmic. The disordered stretch occupies residues 78–98 (DTDAKSSSSESGDEGKKKKKQ). Phosphoserine occurs at positions 84, 85, 86, and 88.

The protein belongs to the SPCS1 family. In terms of assembly, component of the signal peptidase complex (SPC) composed of a catalytic subunit twr/SEC11 and three accessory subunits Spase12/SPCS1, Spase25/SPCS2 and Spase22-23/SPCS3. The complex induces a local thinning of the ER membrane which is used to measure the length of the signal peptide (SP) h-region of protein substrates. This ensures the selectivity of the complex towards h-regions shorter than 18-20 amino acids.

It localises to the endoplasmic reticulum membrane. Component of the signal peptidase complex (SPC) which catalyzes the cleavage of N-terminal signal sequences from nascent proteins as they are translocated into the lumen of the endoplasmic reticulum. Dispensable for SPC enzymatic activity. In terms of biological role, (Microbial infection) Plays an important role in infection by flaviviruses such as West Nile virus and Dengue virus type 2. The sequence is that of Signal peptidase complex subunit 1 (Spase12) from Drosophila melanogaster (Fruit fly).